Consider the following 535-residue polypeptide: T-complex protein 1 subunit beta (535 aa).

Ala2 carries the N-acetylalanine modification. The residue at position 3 (Ser3) is a Phosphoserine. Residue Lys13 is modified to N6-acetyllysine. Gly44 provides a ligand contact to ADP. ATP is bound at residue Gly44. Asp97 provides a ligand contact to Mg(2+). The ADP site is built by Gly98, Thr99, Thr100, Ser101, Ser168, and Ser169. The ATP site is built by Gly98, Thr99, and Thr100. Lys181 carries the N6-acetyllysine modification. Residue Lys248 forms a Glycyl lysine isopeptide (Lys-Gly) (interchain with G-Cter in SUMO2) linkage. Ser260 is modified (phosphoserine). Thr261 carries the post-translational modification Phosphothreonine. The ADP site is built by Gly410, Glu495, and Lys500. ATP-binding residues include Glu495 and Lys500.

This sequence belongs to the TCP-1 chaperonin family. As to quaternary structure, component of the chaperonin-containing T-complex (TRiC), a hexadecamer composed of two identical back-to-back stacked rings enclosing a protein folding chamber. Each ring is made up of eight different subunits: TCP1/CCT1, CCT2, CCT3, CCT4, CCT5, CCT6A/CCT6, CCT7, CCT8. Interacts with PACRG. Interacts with FLCN. Interacts with DLEC1. Interacts with SVEP1. The N-terminus is blocked.

The protein localises to the cytoplasm. It carries out the reaction ATP + H2O = ADP + phosphate + H(+). Component of the chaperonin-containing T-complex (TRiC), a molecular chaperone complex that assists the folding of actin, tubulin and other proteins upon ATP hydrolysis. The TRiC complex mediates the folding of WRAP53/TCAB1, thereby regulating telomere maintenance. As part of the TRiC complex may play a role in the assembly of BBSome, a complex involved in ciliogenesis regulating transports vesicles to the cilia. The sequence is that of T-complex protein 1 subunit beta (Cct2) from Mus musculus (Mouse).